We begin with the raw amino-acid sequence, 931 residues long: Short transient receptor potential channel 6 (931 aa).

Over residues methionine 1–alanine 23 the composition is skewed to low complexity. The segment at methionine 1–asparagine 26 is disordered. Topologically, residues methionine 1–glycine 438 are cytoplasmic. ANK repeat units follow at residues isoleucine 97–valine 126, methionine 132–valine 161, aspartate 163–glycine 189, and histidine 218–arginine 247. Residues proline 439 to methionine 459 traverse the membrane as a helical segment. Residues asparagine 460–lysine 487 lie on the Extracellular side of the membrane. N-linked (GlcNAc...) asparagine glycosylation is present at asparagine 473. A helical membrane pass occupies residues threonine 488 to alanine 508. Over glutamate 509 to tyrosine 521 the chain is Cytoplasmic. Residues leucine 522–isoleucine 542 form a helical membrane-spanning segment. Topologically, residues alanine 543 to glutamine 592 are extracellular. A glycan (N-linked (GlcNAc...) asparagine) is linked at asparagine 561. A helical membrane pass occupies residues isoleucine 593–isoleucine 613. Residues leucine 614–lysine 636 are Cytoplasmic-facing. Residues phenylalanine 637–serine 657 traverse the membrane as a helical segment. At tyrosine 658–valine 706 the chain is on the extracellular side. Residues leucine 707–isoleucine 727 form a helical membrane-spanning segment. Topologically, residues asparagine 728–arginine 931 are cytoplasmic. Serine 815 is modified (phosphoserine).

This sequence belongs to the transient receptor (TC 1.A.4) family. STrpC subfamily. TRPC6 sub-subfamily. Homodimer; forms channel complex. Interacts with MX1 and RNF24. Phosphorylated by FYN, leading to an increase of TRPC6 channel activity. In terms of tissue distribution, expressed primarily in placenta, lung, spleen, ovary and small intestine. Expressed in podocytes and is a component of the glomerular slit diaphragm.

It localises to the cell membrane. The enzyme catalyses Ca(2+)(in) = Ca(2+)(out). With respect to regulation, activated by diacylglycerol (DAG) in a membrane-delimited fashion, independently of protein kinase C. Its function is as follows. Forms a receptor-activated non-selective calcium permeant cation channel. Probably is operated by a phosphatidylinositol second messenger system activated by receptor tyrosine kinases or G-protein coupled receptors. Activated by diacylglycerol (DAG) in a membrane-delimited fashion, independently of protein kinase C. Seems not to be activated by intracellular calcium store depletion. The polypeptide is Short transient receptor potential channel 6 (Homo sapiens (Human)).